A 419-amino-acid chain; its full sequence is Effector protein BipC (419 aa).

2 disordered regions span residues 62–94 and 338–402; these read VAGS…GLER and LQSG…AKSQ. Basic and acidic residues-rich tracts occupy residues 71–94 and 380–392; these read ELAR…GLER and TRDE…REAA.

This sequence belongs to the SctB/SipC family.

The protein resides in the secreted. In Burkholderia pseudomallei (strain 1710b), this protein is Effector protein BipC (bipC).